The following is a 310-amino-acid chain: Putative type II methyltransferase M.MJ0563P (310 aa).

In terms of domain architecture, SAM-dependent MTase C5-type spans 1–310 (MNVIDLFSGC…AIAKEIKKQL (310 aa)). Cys-77 is an active-site residue.

The protein belongs to the class I-like SAM-binding methyltransferase superfamily. C5-methyltransferase family.

It catalyses the reaction a 2'-deoxycytidine in DNA + S-adenosyl-L-methionine = a 5-methyl-2'-deoxycytidine in DNA + S-adenosyl-L-homocysteine + H(+). Its function is as follows. A putative methylase that may protect DNA from cleavage by an unknown endonuclease. In Methanocaldococcus jannaschii (strain ATCC 43067 / DSM 2661 / JAL-1 / JCM 10045 / NBRC 100440) (Methanococcus jannaschii), this protein is Putative type II methyltransferase M.MJ0563P.